The following is a 120-amino-acid chain: MHARSEIRLTFNQDRPQSNEDDGSGLAVQEAKPILQAPPMYKVVLFNDDYTPMDFVVEVLETFFSLNRELATKIMLTVHTEGRAVCGLFTRDIAETKAMQVNQYARESQHPLLCEIEKDG.

Residues 1 to 25 (MHARSEIRLTFNQDRPQSNEDDGSG) form a disordered region.

It belongs to the ClpS family. In terms of assembly, binds to the N-terminal domain of the chaperone ClpA.

Involved in the modulation of the specificity of the ClpAP-mediated ATP-dependent protein degradation. The protein is ATP-dependent Clp protease adapter protein ClpS of Pseudomonas putida (strain W619).